The primary structure comprises 64 residues: Large ribosomal subunit protein bL33 (64 aa).

It belongs to the bacterial ribosomal protein bL33 family.

In Parasynechococcus marenigrum (strain WH8102), this protein is Large ribosomal subunit protein bL33.